The sequence spans 592 residues: Putative amidase ARB_02965 (592 aa).

A signal peptide spans methionine 1–alanine 21. N-linked (GlcNAc...) asparagine glycosylation is present at asparagine 120. The active-site Charge relay system is lysine 161. Asparagine 217 carries N-linked (GlcNAc...) asparagine glycosylation. Catalysis depends on serine 242, which acts as the Charge relay system. Residues serine 242 and threonine 263 to serine 266 contribute to the substrate site. Catalysis depends on serine 266, which acts as the Acyl-ester intermediate. Residues asparagine 326, asparagine 430, and asparagine 528 are each glycosylated (N-linked (GlcNAc...) asparagine).

It belongs to the amidase family.

Its subcellular location is the secreted. In Arthroderma benhamiae (strain ATCC MYA-4681 / CBS 112371) (Trichophyton mentagrophytes), this protein is Putative amidase ARB_02965.